Here is a 294-residue protein sequence, read N- to C-terminus: Tissue factor (294 aa).

A signal peptide spans 1-28 (MAILVRPRLLAALAPTFLGCLLLQVIAG). The Extracellular segment spans residues 29-251 (AGIPEKAFNL…TEQWKSFLGE (223 aa)). Residues Asn-37 and Asn-57 are each glycosylated (N-linked (GlcNAc...) asparagine). An intrachain disulfide couples Cys-75 to Cys-83. N-linked (GlcNAc...) asparagine glycosylation is found at Asn-169 and Asn-200. The cysteines at positions 218 and 241 are disulfide-linked. A WKS motif motif is present at residues 245 to 247 (WKS). Residues 252–274 (TLIIVGAVVLLATIFIILLSISL) traverse the membrane as a helical segment. Residue Cys-275 is the site of S-palmitoyl cysteine attachment. The Cytoplasmic portion of the chain corresponds to 275-294 (CKRRKNRAGQKGKNTPSRLA).

It belongs to the tissue factor family. As to quaternary structure, interacts with HSPE; the interaction, inhibited by heparin, promotes the generation of activated factor X and activates coagulation in the presence of activated factor VII.

It is found in the membrane. Initiates blood coagulation by forming a complex with circulating factor VII or VIIa. The [TF:VIIa] complex activates factors IX or X by specific limited proteolysis. TF plays a role in normal hemostasis by initiating the cell-surface assembly and propagation of the coagulation protease cascade. This chain is Tissue factor (F3), found in Mus musculus (Mouse).